Reading from the N-terminus, the 297-residue chain is MGKQRLNAAIIGPGNIGTDLMYKILRRSEYLELKLVAGIVAESEGLRLAREEGVATSAAGIQAILDRKDIDIVFDATTAHAHAQHAPLLKDAGIIAVDLTPAAVGPYVMPVVNLEEHIDAMNVNLITCGGQATIPIVYAISRVVPTAYAEIVATIASKSAGPGTRQNIDEFTLTTAKGIVDIGNAQKGKAIILLNPADPPMMMNNTIYALIDQVDPAIEQKITESVEEIIKEVQAFVPGYKLKIPPMFDGNKVTVMIEVEGSGDYLPQYSGNLDLETCAALAVAEKMAKHKLAAGAN.

Residue Cys-128 is the Acyl-thioester intermediate of the active site. Residues 159 to 167 and Asn-272 each bind NAD(+); that span reads SAGPGTRQN.

The protein belongs to the acetaldehyde dehydrogenase family.

The enzyme catalyses acetaldehyde + NAD(+) + CoA = acetyl-CoA + NADH + H(+). In Desulfitobacterium hafniense (strain DSM 10664 / DCB-2), this protein is Acetaldehyde dehydrogenase.